The sequence spans 159 residues: 2-C-methyl-D-erythritol 2,4-cyclodiphosphate synthase (159 aa).

D10 and H12 together coordinate a divalent metal cation. 4-CDP-2-C-methyl-D-erythritol 2-phosphate contacts are provided by residues 10-12 (DVH) and 36-37 (HS). H44 lines the a divalent metal cation pocket. Residues 58–60 (DIG), 63–67 (FPDTD), 102–108 (AQAPRMA), 134–137 (TTSE), F141, and R144 each bind 4-CDP-2-C-methyl-D-erythritol 2-phosphate.

The protein belongs to the IspF family. As to quaternary structure, homotrimer. A divalent metal cation is required as a cofactor.

It carries out the reaction 4-CDP-2-C-methyl-D-erythritol 2-phosphate = 2-C-methyl-D-erythritol 2,4-cyclic diphosphate + CMP. The protein operates within isoprenoid biosynthesis; isopentenyl diphosphate biosynthesis via DXP pathway; isopentenyl diphosphate from 1-deoxy-D-xylulose 5-phosphate: step 4/6. Involved in the biosynthesis of isopentenyl diphosphate (IPP) and dimethylallyl diphosphate (DMAPP), two major building blocks of isoprenoid compounds. Catalyzes the conversion of 4-diphosphocytidyl-2-C-methyl-D-erythritol 2-phosphate (CDP-ME2P) to 2-C-methyl-D-erythritol 2,4-cyclodiphosphate (ME-CPP) with a corresponding release of cytidine 5-monophosphate (CMP). This chain is 2-C-methyl-D-erythritol 2,4-cyclodiphosphate synthase, found in Cellvibrio japonicus (strain Ueda107) (Pseudomonas fluorescens subsp. cellulosa).